A 308-amino-acid polypeptide reads, in one-letter code: Ribosomal RNA small subunit methyltransferase H (308 aa).

Residues 33 to 35 (GGH), D52, F78, D99, and Q106 contribute to the S-adenosyl-L-methionine site. Residues 289-308 (EEIETNSRSRSAKLRVAEKL) form a disordered region.

This sequence belongs to the methyltransferase superfamily. RsmH family.

It is found in the cytoplasm. It carries out the reaction cytidine(1402) in 16S rRNA + S-adenosyl-L-methionine = N(4)-methylcytidine(1402) in 16S rRNA + S-adenosyl-L-homocysteine + H(+). Its function is as follows. Specifically methylates the N4 position of cytidine in position 1402 (C1402) of 16S rRNA. The polypeptide is Ribosomal RNA small subunit methyltransferase H (Thermoanaerobacter sp. (strain X514)).